Here is a 180-residue protein sequence, read N- to C-terminus: Type-1 fimbrial protein, C chain (180 aa).

Positions 1 to 23 (MKLKFISMAVFSALTLGVATNAS) are cleaved as a signal peptide. Residues C44 and C84 are joined by a disulfide bond.

This sequence belongs to the fimbrial protein family.

It is found in the fimbrium. Its function is as follows. Fimbriae (also called pili), polar filaments radiating from the surface of the bacterium to a length of 0.5-1.5 micrometers and numbering 100-300 per cell, enable bacteria to colonize the epithelium of specific host organs. This Escherichia coli O6:H1 (strain CFT073 / ATCC 700928 / UPEC) protein is Type-1 fimbrial protein, C chain (pilC).